We begin with the raw amino-acid sequence, 239 residues long: 7-cyano-7-deazaguanine synthase (239 aa).

ATP is bound at residue 13-23 (LSGGQDSATCL). Zn(2+) contacts are provided by Cys199, Cys214, Cys217, and Cys220.

The protein belongs to the QueC family. It depends on Zn(2+) as a cofactor.

The catalysed reaction is 7-carboxy-7-deazaguanine + NH4(+) + ATP = 7-cyano-7-deazaguanine + ADP + phosphate + H2O + H(+). It participates in purine metabolism; 7-cyano-7-deazaguanine biosynthesis. Functionally, catalyzes the ATP-dependent conversion of 7-carboxy-7-deazaguanine (CDG) to 7-cyano-7-deazaguanine (preQ(0)). This Acidovorax ebreus (strain TPSY) (Diaphorobacter sp. (strain TPSY)) protein is 7-cyano-7-deazaguanine synthase.